The chain runs to 357 residues: MQAIISTAPGQAALVHDRPLPTIRDGYLLVKTKAVALNPTDWKHIEVTQKPGILFGCDYAGIVEQVGPGVQSGFQPGDRVAGFVHGGNSKEPQDGAFAEYIVAKADLQIHIPEHMSFEEAATLGVGITAVGQGLYQTLSLPFPSPSSIHEDGAEKPANPATQPILIYGASTASGVLGIQFAKLSGFAPLAVCSPDHFDLAERLGAVAVFDYADGEDAVEEIQDYVRGMGQPLLKAWDTISIPSSARFCGDALSSGNGPQYASLLSMTCPRPDVTSTTTMAYTVFGEDWGMGTAHFPASGVDAELGRRWWALVQQLLNEGRIQTHRIIAGEGGLDGVLGGLQQLRDSQVRGGKLVFRV.

Tyrosine 211 lines the NADP(+) pocket.

This sequence belongs to the zinc-containing alcohol dehydrogenase family.

The protein operates within antifungal biosynthesis. Trans-enoyl reductase; part of the gene cluster that mediates the biosynthesis of the tetrahydropyranyl antifungal agent restricticin that acts as an inhibitor of CYP51 and blocks the ergosterol biosynthesis. The highly reducing polyketide synthase resH, the short chain dehydrogenase resG, the cyclase resF, the FAD-dependent monooxygenase resA and the enoylreductase resD are required to generate the first stable intermediate desmethylrestrictinol. ResH with resD biosynthesize the first polyketide chain intermediate that is reduced by resG, followed by epoxidation by resA before 6-endo cyclization via epoxide opening by resF leads to desmethylrestrictinol. The methyltransferase resE then catalyzes the C4 O-methylation of desmethylrestrictinol to produce restrictinol, and the nonribosomal peptide synthetase resC catalyzes the C3 esterification of restrictinol with glycine that leads to restricticin. The chain is Trans-enoyl reductase resD from Aspergillus sclerotiorum.